Consider the following 441-residue polypeptide: Matrix extracellular phosphoglycoprotein (441 aa).

An N-terminal signal peptide occupies residues 1–24 (MTPEGLMKMQAVSVGLLLFSMTWA). An N-linked (GlcNAc...) asparagine glycan is attached at asparagine 82. Positions 137–441 (QSSPVKSKHT…SGSSSESHGD (305 aa)) are disordered. Positions 142 to 156 (KSKHTKHTRQTRRST) are enriched in basic residues. Residues 178-200 (PDLLVRGDNDVPPFSGDGQHFMH) form a dentonin region. A Cell attachment site motif is present at residues 183-185 (RGD). O-linked (Xyl...) (chondroitin sulfate) serine glycosylation occurs at serine 192. Residues 211–223 (PESSTSRPLSGSS) are compositionally biased toward polar residues. Residues 313 to 325 (SREKVKGGVEHAG) show a composition bias toward basic and acidic residues. Polar residues-rich tracts occupy residues 349–358 (GNQLTLTASQ) and 391–405 (GQNN…SQRR). Residues 424–441 (RDSSESSSSGSSSESHGD) form an ASARM motif; interaction with PHEX region. Low complexity predominate over residues 428–441 (ESSSSGSSSESHGD).

This sequence belongs to the PF07175/osteoregulin family. As to quaternary structure, interacts (via ASARM motif) with PHEX; the interaction is zinc-dependent. Phosphorylated on serine residues in the ASARM motif; the phosphorylation is important for the inhibition of bone mineralization. In terms of processing, cleaved by CTSB/cathepsin B; the cleavage is blocked by metalloprotease PHEX. As to expression, expressed in osteocytes (at protein level). Expressed by chondrocytes, specifically in the hypertrophic zone of the bone growth plate (at protein level). Expressed in osteoblasts in bone (at protein level). Expressed by osteoblasts within the metaphysis (at protein level). Expressed at low levels in white fat, brown fat, testes, brain and aorta. Expressed in the craniofacial complex (at protein level). Expressed in odontoblasts, ameloblasts and in predentin during tooth development (at protein level). Expressed in the kidney (at protein level). Expressed in osteocytes in mandibular condylar cartilage and tibial cartilage (at protein level). Expressed in salivary glands.

Its subcellular location is the secreted. It localises to the extracellular space. The protein localises to the extracellular matrix. In terms of biological role, regulates renal phosphate and uric acid excretion. Regulates bone mineralization by osteoblasts and cartilage mineralization by chondrocytes. Regulates the mineralization of the extracellular matrix of the craniofacial complex, such as teeth, bone and cartilage. Increases dental pulp stem cell proliferation. The protein is Matrix extracellular phosphoglycoprotein of Mus musculus (Mouse).